Consider the following 386-residue polypeptide: Patatin-06 (386 aa).

The N-terminal stretch at 1 to 23 (MATTKSFLILFFMILATTSSTCA) is a signal peptide. A PNPLA domain is found at 32 to 229 (LSIDGGGIKG…TVGDPALLSL (198 aa)). Positions 36 to 41 (GGGIKG) match the GXGXXG motif. The GXSXG motif lies at 75–79 (GTSTG). Residue serine 77 is the Nucleophile of the active site. Asparagine 115 carries N-linked (GlcNAc...) asparagine glycosylation. Aspartate 215 functions as the Proton acceptor in the catalytic mechanism. The DGA/G motif lies at 215 to 217 (DGG). Positions 321–384 (ENALTGTTTE…NRKKLRANKA (64 aa)) form a coiled coil.

This sequence belongs to the patatin family. In terms of tissue distribution, tuber.

The protein resides in the vacuole. Functionally, probable lipolytic acyl hydrolase (LAH), an activity which is thought to be involved in the response of tubers to pathogens. The sequence is that of Patatin-06 from Solanum tuberosum (Potato).